The chain runs to 856 residues: Mechanosensitive ion channel protein 6 (856 aa).

Disordered stretches follow at residues 45–86 and 116–226; these read GEGN…DPPT and RGLT…PFAA. Basic and acidic residues-rich tracts occupy residues 70 to 85 and 129 to 140; these read QQKD…EDPP and TKRDPVGRRDSR. Residues 155–168 show a composition bias toward polar residues; it reads SGNNAPIQRSSSTL. The residue at position 211 (Ser-211) is a Phosphoserine. Over residues 217–226 the composition is skewed to acidic residues; sequence EEEEDDPFAA. 4 helical membrane passes run 242–262, 283–303, 323–343, and 360–380; these read IVLE…TLAI, LVLI…VFFI, AVQN…LFDE, and IFVC…LVKV. Ser-462 bears the Phosphoserine mark. Helical transmembrane passes span 615–635 and 651–671; these read MVNI…LGIT and AFIF…LFVI.

This sequence belongs to the MscS (TC 1.A.23) family.

Its subcellular location is the membrane. Functionally, mechanosensitive channel that opens in response to stretch forces in the membrane lipid bilayer. The polypeptide is Mechanosensitive ion channel protein 6 (MSL6) (Arabidopsis thaliana (Mouse-ear cress)).